We begin with the raw amino-acid sequence, 302 residues long: MLSQYLRKHHLLSRRHQFMRCASQSRSPPRSLLQRQAKRRGEAEAVAPSQLIVTSLKDIFSTFQPSGFTQEDDELEAVKQREDAMQRLENGELRELLLHKFGARRIPSTTETGNSVGDLRIPPRNINQAFHNLTTQERELIEVFQSLGTPSMNWRDVPLVSKQLQFYISFGSYGPREGITFLGSKPEDFIWSKTSRRLLPGQTVRKLPKDATTNTWTCIPSRKANFERMKKGLDPGTRIIAWLGILIVMIASVRDYKQRRDSEATVKVSEFTEQETSEPQAAQQDTAPISKTPKSWYQFWKS.

The transit peptide at methionine 1–cysteine 21 directs the protein to the mitochondrion. Residues arginine 20–glutamate 44 form a disordered region. A helical transmembrane segment spans residues glycine 236 to valine 253. Residues alanine 264–serine 290 form a disordered region. Positions serine 277–serine 290 are enriched in polar residues.

This sequence belongs to the GEP7 family.

Its subcellular location is the mitochondrion membrane. Involved in respiratory growth and required for cell survival in the absence of prohibitins. This Lachancea thermotolerans (strain ATCC 56472 / CBS 6340 / NRRL Y-8284) (Yeast) protein is Genetic interactor of prohibitin 7, mitochondrial (GEP7).